The primary structure comprises 451 residues: UDP-N-acetylmuramate--L-alanine ligase (451 aa).

Residue 110–116 (GTHGKTT) coordinates ATP.

Belongs to the MurCDEF family.

The protein localises to the cytoplasm. The catalysed reaction is UDP-N-acetyl-alpha-D-muramate + L-alanine + ATP = UDP-N-acetyl-alpha-D-muramoyl-L-alanine + ADP + phosphate + H(+). The protein operates within cell wall biogenesis; peptidoglycan biosynthesis. Its function is as follows. Cell wall formation. This is UDP-N-acetylmuramate--L-alanine ligase from Francisella tularensis subsp. tularensis (strain SCHU S4 / Schu 4).